A 201-amino-acid chain; its full sequence is 3-isopropylmalate dehydratase small subunit (201 aa).

It belongs to the LeuD family. LeuD type 1 subfamily. Heterodimer of LeuC and LeuD.

It catalyses the reaction (2R,3S)-3-isopropylmalate = (2S)-2-isopropylmalate. It participates in amino-acid biosynthesis; L-leucine biosynthesis; L-leucine from 3-methyl-2-oxobutanoate: step 2/4. In terms of biological role, catalyzes the isomerization between 2-isopropylmalate and 3-isopropylmalate, via the formation of 2-isopropylmaleate. In Ruegeria sp. (strain TM1040) (Silicibacter sp.), this protein is 3-isopropylmalate dehydratase small subunit.